Reading from the N-terminus, the 1074-residue chain is ADAMTS-like protein 4 (1074 aa).

Positions 1–24 are cleaved as a signal peptide; the sequence is MENWTGRPWLYLLLLLSLPQLCLD. The TSP type-1 1 domain occupies 48-93; sequence GPWVQWASCSQPCGVGVQRRSRTCQLPTVQLHPSLPLPPRPPRHPE. Residues 77–342 form a disordered region; the sequence is QLHPSLPLPP…QHPGAWLPLL (266 aa). Residues 103–119 are compositionally biased toward polar residues; the sequence is RPQTSPETLPLYRTQSR. The span at 132 to 152 shows a compositional bias: basic and acidic residues; that stretch reads LGREETQEIRAARRSRLRDPI. Over residues 206-226 the composition is skewed to polar residues; that stretch reads ANGSPQTELPPTELSVHTPSP. Gly residues predominate over residues 310 to 323; the sequence is GQQGQGPWGTGGTP. N490 is a glycosylation site (N-linked (GlcNAc...) (complex) asparagine). TSP type-1 domains follow at residues 723–782, 783–842, 845–909, 910–969, and 970–1026; these read CPPY…QLRL, CGHW…GPCT, WFHS…GPCE, RTWR…QGQA, and CQDR…QPCS. N773 carries an N-linked (GlcNAc...) asparagine glycan. Positions 1029-1066 constitute a PLAC domain; sequence PDDQCKDSSPHCPLVVQARLCVYPYYTATCCRSCAHVL.

As to quaternary structure, interacts with CTSB. Interacts with FBN1. Post-translationally, N-glycosylated. Can be O-fucosylated by POFUT2 on a serine or a threonine residue found within the consensus sequence C1-X(2)-(S/T)-C2-G of the TSP type-1 repeat domains where C1 and C2 are the first and second cysteine residue of the repeat, respectively. Fucosylated repeats can then be further glycosylated by the addition of a beta-1,3-glucose residue by the glucosyltransferase, B3GALTL. Fucosylation mediates the efficient secretion of ADAMTS family members. Can also be C-glycosylated with one or two mannose molecules on tryptophan residues within the consensus sequence W-X-X-W of the TPRs. N- and C-glycosylations can also facilitate secretion. Expressed in colon, heart, leukocyte, liver, lung, skeletal muscle, spleen, testis and placenta. Weaker expression in bone marrow, brain tissue, kidney and pancreas. Expression studies in fetal tissues reveal strong expression in heart, kidney, liver, lung and skeletal muscle, but weaker expression in fetal brain and skin.

The protein resides in the secreted. Its subcellular location is the extracellular space. It is found in the extracellular matrix. Its function is as follows. Positive regulation of apoptosis. May facilitate FBN1 microfibril biogenesis. This chain is ADAMTS-like protein 4 (ADAMTSL4), found in Homo sapiens (Human).